Reading from the N-terminus, the 630-residue chain is Transposase B from transposon Tn554 (630 aa).

A Core-binding (CB) domain is found at 216–302 (TYFKQLVKRY…ILEGLFSTLL (87 aa)). In terms of domain architecture, Tyr recombinase spans 326–513 (AKPRFIDEFV…FDETLKNEFT (188 aa)). Active-site residues include Arg363, Lys391, His465, Arg468, and His491. The active-site O-(3'-phospho-DNA)-tyrosine intermediate is Tyr500.

It belongs to the 'phage' integrase family.

In terms of biological role, one of three proteins encoded by transposon Tn554 required for its transposition. This is Transposase B from transposon Tn554 (tnpB1) from Staphylococcus aureus (strain Mu50 / ATCC 700699).